The sequence spans 68 residues: Large ribosomal subunit protein bL35 (68 aa).

It belongs to the bacterial ribosomal protein bL35 family.

The sequence is that of Large ribosomal subunit protein bL35 from Wolbachia pipientis wMel.